A 134-amino-acid chain; its full sequence is Interferon-induced transmembrane protein 5 (134 aa).

Basic and acidic residues predominate over residues 1–20 (MDTSYPREDPRAPSSRKADA). The tract at residues 1–31 (MDTSYPREDPRAPSSRKADAAAHTALSMGTP) is disordered. The Extracellular segment spans residues 1–39 (MDTSYPREDPRAPSSRKADAAAHTALSMGTPGPTPRDHM). Residues 40–60 (LWSVFSTMYLNLCCLGFLALV) form a helical membrane-spanning segment. Residues Cys52, Cys53, and Cys86 are each lipidated (S-palmitoyl cysteine). Over 61-88 (HSVKARDQKMAGNLEAARQYGSKAKCYN) the chain is Cytoplasmic. A helical membrane pass occupies residues 89–109 (ILAAMWTLVPPLLLLGLVVTG). The Extracellular segment spans residues 110-134 (ALHLSKLAKDSAAFFSTKFDEEDYN).

This sequence belongs to the CD225/Dispanin family. In terms of assembly, interacts with FKBP11. In terms of processing, palmitoylated. In terms of tissue distribution, detected in embryonic bone (at protein level). Highly expressed in osteoblasts of adults and embryos. Expressed in primitive hemopoietic cells.

Its subcellular location is the cell membrane. Functionally, required for normal bone mineralization. In Mus musculus (Mouse), this protein is Interferon-induced transmembrane protein 5 (Ifitm5).